A 1213-amino-acid polypeptide reads, in one-letter code: MRSRNQGGESASDGHISCPKPSIIGNAGEKSLSEDAKKKKKSNRKEDDVMASGTVKRHLKTSGECERKTKKSLELSKEDLIQLLSIMEGELQAREDVIHMLKTEKTKPEVLEAHYGSAEPEKVLRVLHRDAILAQEKSIGEDVYEKPISELDRLEEKQKETYRRMLEQLLLAEKCHRRTVYELENEKHKHTDYMNKSDDFTNLLEQERERLKKLLEQEKAYQARKEKENAKRLNKLRDELVKLKSFALMLVDERQMHIEQLGLQSQKVQDLTQKLREEEEKLKAITSKSKEDRQKLLKLEVDFEHKASRFSQEHEEMNAKLANQESHNRQLRLKLVGLTQRIEELEETNKNLQKAEEELQELRDKIAKGECGNSSLMAEVENLRKRVLEMEGKDEEITKTESQCRELRKKLQEEEHHSKELRLEVEKLQKRMSELEKLEEAFSKSKSECTQLHLNLEKEKNLTKDLLNELEVVKSRVKELECSESRLEKAELSLKDDLTKLKSFTVMLVDERKNMMEKIKQEERKVDGLNKNFKVEQGKVMDVTEKLIEESKKLLKLKSEMEEKVYNLTRERDELIGKLKSEEEKSSELSCSVDLLKKRLDGIEEVEREITRGRSRKGSELTCPEDNKIKELTLEIERLKKRLQQLEVVEGDLMKTEDEYDQLEQKFRTEQDKANFLSQQLEEIKHQIAKNKAIEKGEVVSQEAELRHRFRLEEAKSRDLKAEVQALKEKIHELMNKEDQLSQLQVDYSVLQQRFMEEENKNKNMGQEVLNLTKELELSKRYSRALRPSVNGRRMVDVPVTSTGVQTDAVSGEAAEEETPAVFIRKSFQEENHIMSNLRQVGLKKPVERSSVLDRYPPAANELTMRKSWIPWMRKRENGPSITQEKGPRTNSSPGHPGEVVLSPKQGQPLHIRVTPDHENSTATLEITSPTSEEFFSSTTVIPTLGNQKPRITIIPSPNVMPQKQKSGDTTLGPERAMSPVTITTFSREKTPESGRGAFADRPTSPIQIMTVSTSAAPAEIAVSPESQEMPMGRTILKVTPEKQTVPTPVRKYNSNANIITTEDNKIHIHLGSQFKRSPGTSGEGVSPVITVRPVNVTAEKEVSTGTVLRSPRNHLSSRPGASKVTSTITITPVTTSSARGTQSVSGQDGSSQRPTPTRIPMSKGMKAGKPVVAAPGAGNLTKFEPRAETQSMKIELKKSAASSTTSLGGGKG.

A disordered region spans residues 1-70 (MRSRNQGGES…TSGECERKTK (70 aa)). Residues 61-70 (TSGECERKTK) are compositionally biased toward basic and acidic residues. Phosphoserine is present on Ser-138. 2 coiled-coil regions span residues 192–591 (DYMN…ELSC) and 624–781 (PEDN…LSKR). Disordered regions lie at residues 878–900 (NGPS…PGEV) and 949–976 (KPRI…GPER). Polar residues-rich tracts occupy residues 880 to 894 (PSIT…NSSP) and 960 to 970 (VMPQKQKSGDT). Ser-979 is subject to Phosphoserine. Residues 1103 to 1213 (VSTGTVLRSP…STTSLGGGKG (111 aa)) form a disordered region. The segment covering 1125–1138 (VTSTITITPVTTSS) has biased composition (low complexity). Residues 1139–1156 (ARGTQSVSGQDGSSQRPT) are compositionally biased toward polar residues. Low complexity predominate over residues 1168–1179 (AGKPVVAAPGAG).

The protein belongs to the FILIP1 family. Interacts with FLNA. Interacts with RHOD (in GTP-bound form). Moderately expressed in adult heart and brain. Weakly expressed in lung, skeletal muscle, ovary, testis, kidney, and fetal brain, and hardly detectable in liver, pancreas, spleen, and fetal liver. Within brain, moderate expression is found in amygdala and caudate nucleus. Expressed in skin fibroblasts.

It localises to the cytoplasm. The protein localises to the cytoskeleton. Functionally, by acting through a filamin-A/F-actin axis, it controls the start of neocortical cell migration from the ventricular zone. May be able to induce the degradation of filamin-A. The protein is Filamin-A-interacting protein 1 (FILIP1) of Homo sapiens (Human).